Reading from the N-terminus, the 170-residue chain is 3-hydroxyanthranilate 3,4-dioxygenase (170 aa).

Arginine 44 is a binding site for O2. Positions 48, 54, and 92 each coordinate Fe cation. Glutamate 54 is a binding site for substrate. Substrate contacts are provided by arginine 96 and glutamate 106. A divalent metal cation-binding residues include cysteine 121, cysteine 124, cysteine 158, and cysteine 161.

Belongs to the 3-HAO family. Requires Fe(2+) as cofactor.

The protein localises to the cytoplasm. It catalyses the reaction 3-hydroxyanthranilate + O2 = (2Z,4Z)-2-amino-3-carboxymuconate 6-semialdehyde. It functions in the pathway cofactor biosynthesis; NAD(+) biosynthesis; quinolinate from L-kynurenine: step 3/3. Catalyzes the oxidative ring opening of 3-hydroxyanthranilate to 2-amino-3-carboxymuconate semialdehyde, which spontaneously cyclizes to quinolinate. The sequence is that of 3-hydroxyanthranilate 3,4-dioxygenase from Scheffersomyces stipitis (strain ATCC 58785 / CBS 6054 / NBRC 10063 / NRRL Y-11545) (Yeast).